Here is a 251-residue protein sequence, read N- to C-terminus: Vitamin B12 import ATP-binding protein BtuD (251 aa).

Positions 2-236 (IRVNSLQVDS…EVLQSVFGTS (235 aa)) constitute an ABC transporter domain. 30 to 37 (GPNGCGKS) is an ATP binding site.

The protein belongs to the ABC transporter superfamily. Vitamin B12 importer (TC 3.A.1.13.1) family. In terms of assembly, the complex is composed of two ATP-binding proteins (BtuD), two transmembrane proteins (BtuC) and a solute-binding protein (BtuF).

It is found in the cell inner membrane. It catalyses the reaction an R-cob(III)alamin(out) + ATP + H2O = an R-cob(III)alamin(in) + ADP + phosphate + H(+). Functionally, part of the ABC transporter complex BtuCDF involved in vitamin B12 import. Responsible for energy coupling to the transport system. The protein is Vitamin B12 import ATP-binding protein BtuD of Vibrio cholerae serotype O1 (strain ATCC 39315 / El Tor Inaba N16961).